The following is a 403-amino-acid chain: S-adenosylmethionine synthase (403 aa).

ATP is bound at residue His-15. Position 17 (Asp-17) interacts with Mg(2+). Glu-43 is a binding site for K(+). Residues Glu-56 and Gln-99 each coordinate L-methionine. The interval 99–109 (QSPHIAQGVDR) is flexible loop. ATP contacts are provided by residues 166 to 168 (DAK), 232 to 233 (KF), Asp-241, 247 to 248 (RK), Ala-264, and Lys-268. Asp-241 is an L-methionine binding site. Lys-272 contributes to the L-methionine binding site.

This sequence belongs to the AdoMet synthase family. Homotetramer; dimer of dimers. It depends on Mg(2+) as a cofactor. Requires K(+) as cofactor.

It localises to the cytoplasm. The enzyme catalyses L-methionine + ATP + H2O = S-adenosyl-L-methionine + phosphate + diphosphate. It participates in amino-acid biosynthesis; S-adenosyl-L-methionine biosynthesis; S-adenosyl-L-methionine from L-methionine: step 1/1. In terms of biological role, catalyzes the formation of S-adenosylmethionine (AdoMet) from methionine and ATP. The overall synthetic reaction is composed of two sequential steps, AdoMet formation and the subsequent tripolyphosphate hydrolysis which occurs prior to release of AdoMet from the enzyme. The chain is S-adenosylmethionine synthase from Stenotrophomonas maltophilia (strain R551-3).